A 515-amino-acid polypeptide reads, in one-letter code: MQLNPAEISDLIKAKIENLSVNAEVRTRGTVVSVTDGIVRIHGLSDAMQGEMLEFPGNTFGLAMNLERDSVGAVVLGEYEHIKEGDTVTCTGRILEVPVGRELVGRVVDALGRPIDGKGPINTTLTAPIEKIAPGVIARKSVDQPMQTGLKAIDSMVPVGRGQRELIIGDRQTGKTAVALDAIVNQKGTGVICIYVAIGQKASSIANVVRKLEEHGAMEHTIVVAATASEAAALQYIAPYSGCTMGEFFRDRGEDALIVYDDLSKQAVAYRQISLLLRRPPGREAYPGDVFYLHSRLLERAARVNEHEVEKLTNGEVKGKTGSLTALPIIETQAGDVSAFVPTNVISITDGQIFLETDLFNAGIRPAINAGISVSRVGGAAQTKVIKKLGGGIRLALAQYRELAAFSQFASDLDEATRKQLEHGEVVTELMKQKQFSTLNTAEMALTLWAINNGSYSDVPVAKALAFESEFLSFVRTQHPEVLEAVNASGAMSDESEKTLEAAMKSFKSSYAYQA.

169-176 lines the ATP pocket; the sequence is GDRQTGKT.

The protein belongs to the ATPase alpha/beta chains family. As to quaternary structure, F-type ATPases have 2 components, CF(1) - the catalytic core - and CF(0) - the membrane proton channel. CF(1) has five subunits: alpha(3), beta(3), gamma(1), delta(1), epsilon(1). CF(0) has three main subunits: a(1), b(2) and c(9-12). The alpha and beta chains form an alternating ring which encloses part of the gamma chain. CF(1) is attached to CF(0) by a central stalk formed by the gamma and epsilon chains, while a peripheral stalk is formed by the delta and b chains.

Its subcellular location is the cell inner membrane. It catalyses the reaction ATP + H2O + 4 H(+)(in) = ADP + phosphate + 5 H(+)(out). Its function is as follows. Produces ATP from ADP in the presence of a proton gradient across the membrane. The alpha chain is a regulatory subunit. The protein is ATP synthase subunit alpha of Neisseria meningitidis serogroup C / serotype 2a (strain ATCC 700532 / DSM 15464 / FAM18).